The following is a 496-amino-acid chain: 6-phosphogluconate dehydrogenase, decarboxylating (496 aa).

NADP(+)-binding positions include 13–18 (GLDVSI), 24–26 (DNV), 68–70 (ITH), and Asn-96. Substrate contacts are provided by residues Asn-96 and 122–124 (SGG). Residue Lys-178 is the Proton acceptor of the active site. 181-182 (HN) is a substrate binding site. Glu-185 serves as the catalytic Proton donor. Substrate contacts are provided by Arg-300 and His-468. The interval 476–496 (PGEDPGPVSKGPHHYEWRPAK) is disordered.

Belongs to the 6-phosphogluconate dehydrogenase family. In terms of assembly, homodimer.

Its subcellular location is the cytoplasm. It carries out the reaction 6-phospho-D-gluconate + NADP(+) = D-ribulose 5-phosphate + CO2 + NADPH. It participates in carbohydrate degradation; pentose phosphate pathway; D-ribulose 5-phosphate from D-glucose 6-phosphate (oxidative stage): step 3/3. In terms of biological role, catalyzes the oxidative decarboxylation of 6-phosphogluconate to ribulose 5-phosphate and CO(2), with concomitant reduction of NADP to NADPH. The protein is 6-phosphogluconate dehydrogenase, decarboxylating of Emericella nidulans (strain FGSC A4 / ATCC 38163 / CBS 112.46 / NRRL 194 / M139) (Aspergillus nidulans).